The sequence spans 317 residues: Protein CbxX, chromosomal (317 aa).

The tract at residues 1–21 (MSAPETTAPLQPPAAPAASLP) is disordered. 85–92 (GNPGTGKT) lines the ATP pocket.

This sequence belongs to the CbxX/CfxQ family.

Seems to be necessary for the expression of RuBisCO. The chain is Protein CbxX, chromosomal (cbxXC) from Cupriavidus necator (strain ATCC 17699 / DSM 428 / KCTC 22496 / NCIMB 10442 / H16 / Stanier 337) (Ralstonia eutropha).